Reading from the N-terminus, the 1361-residue chain is Zinc finger protein GLI4 (1361 aa).

Positions 185-270 (SSFGHTPLLH…PQPPDHLTDL (86 aa)) are disordered. Polar residues-rich tracts occupy residues 198-208 (TFASRQQGALT) and 227-241 (NKVS…TVNQ). 5 C2H2-type zinc fingers span residues 289–314 (TNCH…NNDH), 322–349 (FVCR…MRRH), 355–379 (HKCT…LRSH), 385–410 (YVCD…NRTH), and 416–441 (YICK…KTVH). Disordered stretches follow at residues 434–527 (RKHV…TNNI), 556–584 (STVS…GTAE), 647–720 (NERR…LPNL), 787–832 (NAGL…SMNS), 906–946 (QNRE…APGA), and 1134–1230 (DGLH…PKDN). A compositionally biased stretch (basic and acidic residues) spans 475 to 502 (SGREHSDSVSRDQEHCLQTRTIKTEDNM). Residues 506 to 522 (SSPGGQSSCSSEPSPYG) show a composition bias toward low complexity. A compositionally biased stretch (basic and acidic residues) spans 573–584 (QRIHSAETGTAE). A compositionally biased stretch (low complexity) spans 653–670 (TSSTLSSAYTSRRSSGIS). 2 stretches are compositionally biased toward polar residues: residues 672–695 (YFSS…SSAD) and 710–720 (EASQHSGLPNL). Basic and acidic residues predominate over residues 805–821 (RASDPVRRTAGIDDKPL). Polar residues-rich tracts occupy residues 913 to 939 (QNLQ…NTPE) and 1142 to 1164 (YTVQ…SGQA). Over residues 1172 to 1183 (PRPPAAPHPPNR) the composition is skewed to pro residues.

It belongs to the GLI C2H2-type zinc-finger protein family.

It is found in the nucleus. Functionally, has an essential role in the early embryonic patterning of mesoderm and neuroectoderm. This Xenopus laevis (African clawed frog) protein is Zinc finger protein GLI4 (gli4).